The sequence spans 520 residues: GMP synthase [glutamine-hydrolyzing] (520 aa).

The Glutamine amidotransferase type-1 domain maps to 9 to 202 (SVLIVDFGSQ…IHNIAGIKGD (194 aa)). The Nucleophile role is filled by C86. Residues H176 and E178 contribute to the active site. Residues 203–395 (WSMSAYRQKA…LGLPDSFIGR (193 aa)) form the GMPS ATP-PPase domain. 230–236 (SGGVDSS) is a binding site for ATP.

In terms of assembly, homodimer.

It catalyses the reaction XMP + L-glutamine + ATP + H2O = GMP + L-glutamate + AMP + diphosphate + 2 H(+). Its pathway is purine metabolism; GMP biosynthesis; GMP from XMP (L-Gln route): step 1/1. Its function is as follows. Catalyzes the synthesis of GMP from XMP. This is GMP synthase [glutamine-hydrolyzing] from Rhizobium johnstonii (strain DSM 114642 / LMG 32736 / 3841) (Rhizobium leguminosarum bv. viciae).